The chain runs to 125 residues: Large ribosomal subunit protein bL12 (125 aa).

This sequence belongs to the bacterial ribosomal protein bL12 family. Homodimer. Part of the ribosomal stalk of the 50S ribosomal subunit. Forms a multimeric L10(L12)X complex, where L10 forms an elongated spine to which 2 to 4 L12 dimers bind in a sequential fashion. Binds GTP-bound translation factors.

Forms part of the ribosomal stalk which helps the ribosome interact with GTP-bound translation factors. Is thus essential for accurate translation. This chain is Large ribosomal subunit protein bL12, found in Ruegeria sp. (strain TM1040) (Silicibacter sp.).